The sequence spans 390 residues: Tryptophan synthase beta chain 2 (390 aa).

Residue lysine 83 is modified to N6-(pyridoxal phosphate)lysine.

The protein belongs to the TrpB family. Tetramer of two alpha and two beta chains. Requires pyridoxal 5'-phosphate as cofactor.

It catalyses the reaction (1S,2R)-1-C-(indol-3-yl)glycerol 3-phosphate + L-serine = D-glyceraldehyde 3-phosphate + L-tryptophan + H2O. Its pathway is amino-acid biosynthesis; L-tryptophan biosynthesis; L-tryptophan from chorismate: step 5/5. In terms of biological role, the beta subunit is responsible for the synthesis of L-tryptophan from indole and L-serine. The polypeptide is Tryptophan synthase beta chain 2 (trpB2) (Methanothermobacter marburgensis (strain ATCC BAA-927 / DSM 2133 / JCM 14651 / NBRC 100331 / OCM 82 / Marburg) (Methanobacterium thermoautotrophicum)).